We begin with the raw amino-acid sequence, 107 residues long: Putative regulatory protein BCG9842_A0044 (107 aa).

The protein belongs to the RemA family.

The polypeptide is Putative regulatory protein BCG9842_A0044 (Bacillus cereus (strain G9842)).